The sequence spans 304 residues: Polyisoprenyl-teichoic acid--peptidoglycan teichoic acid transferase TagU (304 aa).

Over Met1–Lys3 the chain is Cytoplasmic. A helical; Signal-anchor for type II membrane protein transmembrane segment spans residues Ala4–Ile24. The Extracellular portion of the chain corresponds to Tyr25–Ser304.

This sequence belongs to the LytR/CpsA/Psr (LCP) family.

It localises to the cell membrane. The protein operates within cell wall biogenesis. Functionally, may catalyze the final step in cell wall teichoic acid biosynthesis, the transfer of the anionic cell wall polymers (APs) from their lipid-linked precursor to the cell wall peptidoglycan (PG). This Halalkalibacterium halodurans (strain ATCC BAA-125 / DSM 18197 / FERM 7344 / JCM 9153 / C-125) (Bacillus halodurans) protein is Polyisoprenyl-teichoic acid--peptidoglycan teichoic acid transferase TagU.